A 111-amino-acid polypeptide reads, in one-letter code: Cyclin-dependent protein kinase inhibitor SMR2 (111 aa).

The tract at residues 1-66 (MSKLLETLEE…PPPRKRPREI (66 aa)) is disordered. Basic and acidic residues predominate over residues 10 to 35 (EEKTVEQKPRSQEEEDHQDSSKKEEL).

Interacts with CYCD2-1. Interacts with CDKB1-1. In terms of tissue distribution, expressed at low levels in roots and stems. Expressed in the root vascular tissue.

The protein resides in the nucleus. Functionally, cyclin-dependent protein kinase (CDK) inhibitor that restricts cell proliferation and cooperates with SIM and SMR1 to promote endoreplication during leaf development. The sequence is that of Cyclin-dependent protein kinase inhibitor SMR2 from Arabidopsis thaliana (Mouse-ear cress).